The primary structure comprises 870 residues: MAMEVTQLLINAQSIDGTVRKHAEESLKQFQEQNLAGFLLSLAGELANDEKPVDSRKLAGLVLKNALDAKEQHRKYELVQRWLALDMSTKSQIRAFLLKTLSAPVPDVRSTASQVIAKVAGIELPQKQWPELIVSLLSNIHQLPAHVKQATLETLGYLCEEVSPDVVEQEHVNKILTAVVQGMNAAEGNTDVRLAATRALYMALGFAQANFNNDMERDYIMRVVCEATLSPEVKIRQAAFECLVSIASTYYEKLAHYMQDIFNITAKAVREDDESVALQAIEFWSSICDEEIDILEEYGGEFAGDSDVPCFYFTKQALPGLVPLLLETLLKQEEDQDLDEGAWNIAMAGGTCLGLVARAVGDDIVPHVMPFIEEKISKPDWREREAATYAFGSILEGPSADKLMAIVNAALTFMLNALTNDPSNHVKDTTAWTLGRIFEFLHGSTIETPIINQANCQQIITVLIQSMNDAPNVAEKACGALYFLAQGYEDIGPSSPLTPFFQEIIKSLLAVAHREDATESRLRTAAYEALNEVVRCSTDETSTMVLQLVPVIMMELHNTLEGEKLSLDEREKQNELQGLLCGCLQVIIQKLGSEPTKSKFMEYADQMMGLFLRVFGCRSATAHEEAMLAIGALAYAAGPNFAKYMPEFYKYLEMGLQNFEEYQVCAVTVGVVGDVCRALEDKILPYCDGIMTQLLKDLSSNQLHRSVKPPIFSCFGDIALAIGEDFDKYWRYSMPMLQSAAELSAHSAGADDEMTEYTNSLRNGILEAYSGIFQGFKNSAKTQLLIPFAPHILQFLDSIYMEKDMDEVVMKTAIGVLGDLADTLGSHVGGLIQQSVSSKEFLNECLSSEDHTIKEAAEWAKHAITRAISV.

The residue at position 2 (Ala-2) is an N-acetylalanine. HEAT repeat units follow at residues 4–33 (EVTQ…FQEQ), 35–67 (LAGF…KNAL), 87–126 (MSTK…ELPQ), 132–161 (LIVS…LCEE), 172–204 (VNKI…YMAL), 214–249 (DMER…IAST), 255–304 (AHYM…EFAG), 313–361 (FTKQ…RAVG), 365–395 (VPHV…GSIL), 403–440 (LMAI…IFEF), 456–492 (CQQI…EDIG), 498–535 (TPFF…EVVR), 542–588 (STMV…QVII), 596–637 (TKSK…AYAA), 642–679 (AKYM…CRAL), 684–722 (LPYC…ALAI), 730–776 (WRYS…FQGF), and 826–868 (SHVG…TRAI). The 81-residue stretch at 23-103 (AEESLKQFQE…RAFLLKTLSA (81 aa)) folds into the Importin N-terminal domain.

This sequence belongs to the importin beta family. Importin beta-1 subfamily. In terms of assembly, forms a complex with the importin subunits alpha IMPA1 or IMPA2, the nucleoporin NUP62 and the Ran-GTP-binding proteins RAN1, RAN2 or RAN3. As to expression, expressed in roots, cotyledons, leaves, stems, petals, stamen, stigma, siliques, embryos and guard cells.

The protein resides in the cytoplasm. The protein localises to the nucleus. Functionally, acts as a negative effector of drought tolerance. Involved in the regulation of stomatal closure and in the abscisic acid (ABA)-mediated pathway that lead to drought tolerance. Does not directly mediate nuclear import of ABI1 and ABI2 which are key regulators of the ABA signaling pathway. May be involved in nuclear translocation of other type 2C protein phosphatases that mediate ABA signaling. The polypeptide is Importin subunit beta-1 (Arabidopsis thaliana (Mouse-ear cress)).